The chain runs to 212 residues: Transcription antitermination protein NusB (212 aa).

It belongs to the NusB family.

In terms of biological role, involved in transcription antitermination. Required for transcription of ribosomal RNA (rRNA) genes. Binds specifically to the boxA antiterminator sequence of the ribosomal RNA (rrn) operons. This Gloeothece citriformis (strain PCC 7424) (Cyanothece sp. (strain PCC 7424)) protein is Transcription antitermination protein NusB.